The chain runs to 273 residues: 2,3,4,5-tetrahydropyridine-2,6-dicarboxylate N-succinyltransferase (273 aa).

2 residues coordinate substrate: R104 and D141.

This sequence belongs to the transferase hexapeptide repeat family. As to quaternary structure, homotrimer.

It localises to the cytoplasm. It catalyses the reaction (S)-2,3,4,5-tetrahydrodipicolinate + succinyl-CoA + H2O = (S)-2-succinylamino-6-oxoheptanedioate + CoA. It functions in the pathway amino-acid biosynthesis; L-lysine biosynthesis via DAP pathway; LL-2,6-diaminopimelate from (S)-tetrahydrodipicolinate (succinylase route): step 1/3. In Neisseria meningitidis serogroup C (strain 053442), this protein is 2,3,4,5-tetrahydropyridine-2,6-dicarboxylate N-succinyltransferase.